Consider the following 411-residue polypeptide: uncharacterized protein (411 aa).

A disordered region spans residues 32–108 (LGGDPAPKPT…PEHPRRIPIP (77 aa)).

This is an uncharacterized protein from Ictalurid herpesvirus 1 (strain Auburn) (IcHV-1).